The following is a 693-amino-acid chain: Sulfite reductase 1 [ferredoxin], chloroplastic (693 aa).

Residues 1–62 (MTTSFGAAIN…PSSIVRAVST (62 aa)) constitute a chloroplast transit peptide. Residues cysteine 502, cysteine 508, cysteine 548, and cysteine 552 each coordinate [4Fe-4S] cluster. Cysteine 552 is a siroheme binding site.

The protein belongs to the nitrite and sulfite reductase 4Fe-4S domain family. In terms of assembly, monomer. Interacts with ferredoxin. The cofactor is siroheme. [4Fe-4S] cluster serves as cofactor. In terms of processing, phosphorylated; this phosphorylation reduces DNA-binding. Expressed in leaves, stems, roots and petals.

The protein resides in the plastid. It is found in the chloroplast stroma. It localises to the chloroplast nucleoid. The protein localises to the plastid stroma. The enzyme catalyses hydrogen sulfide + 6 oxidized [2Fe-2S]-[ferredoxin] + 3 H2O = sulfite + 6 reduced [2Fe-2S]-[ferredoxin] + 7 H(+). Essential protein with sulfite reductase activity required in assimilatory sulfate reduction pathway during both primary and secondary metabolism and thus involved in development and growth. In terms of biological role, DNA-binding protein that binds to both double-stranded and single-stranded DNA without significant sequence specificity to reversibly repress the transcriptional activity of chloroplast nucleoids by promoting DNA compaction and possibly regulate DNA replication. This is Sulfite reductase 1 [ferredoxin], chloroplastic (SIR1) from Nicotiana tabacum (Common tobacco).